The primary structure comprises 78 residues: U29-theraphotoxin-Cg1a (78 aa).

The signal sequence occupies residues 1-19 (MRYQTVFWILLIALCTVNP). Cystine bridges form between Cys42-Cys56, Cys49-Cys60, Cys55-Cys77, and Cys67-Cys73.

This sequence belongs to the neurotoxin 13 (insecticidal toxin ABC) family. 03 (JZTX-59) subfamily. As to expression, expressed by the venom gland.

The protein localises to the secreted. Functionally, probable ion channel inhibitor. The protein is U29-theraphotoxin-Cg1a of Chilobrachys guangxiensis (Chinese earth tiger tarantula).